The following is a 400-amino-acid chain: tRNA(Met) cytidine acetate ligase (400 aa).

ATP is bound by residues 7 to 20 (ITEY…HIYH), Gly-102, Asn-165, and Arg-190.

It belongs to the TmcAL family.

The protein localises to the cytoplasm. The enzyme catalyses cytidine(34) in elongator tRNA(Met) + acetate + ATP = N(4)-acetylcytidine(34) in elongator tRNA(Met) + AMP + diphosphate. Functionally, catalyzes the formation of N(4)-acetylcytidine (ac(4)C) at the wobble position of elongator tRNA(Met), using acetate and ATP as substrates. First activates an acetate ion to form acetyladenylate (Ac-AMP) and then transfers the acetyl group to tRNA to form ac(4)C34. In Clostridium novyi (strain NT), this protein is tRNA(Met) cytidine acetate ligase.